Consider the following 239-residue polypeptide: MGASIDDYCLIHKKILHSEDLLKYILETSAYPREHEQLKGLREVTEKHEWSSALVPADEGLFLSMLLKLMNAKRTIEIGVYTGYSLLTTALALPEDGKITAIDVNKSFFEIGLPFIQKAGVEHKINFIESEALPVLDQMLQETKEEDLYDYAFVDADKSNYANYHERLVKLVRIGGAILYDNTLWYGSVAYPEYPGLHPEEEVARLSFRNLNTFLAADPRVEISQVSIGDGVTICRRLY.

S-adenosyl-L-methionine is bound by residues Val-55, Glu-77, 79 to 80 (GV), Ser-85, Asp-103, and Ala-132. Asp-155 lines the a divalent metal cation pocket. Asp-157 lines the S-adenosyl-L-methionine pocket. A divalent metal cation-binding residues include Asp-181 and Asn-182.

It belongs to the class I-like SAM-binding methyltransferase superfamily. Cation-dependent O-methyltransferase family. Mg(2+) serves as cofactor.

It catalyses the reaction norbelladine + S-adenosyl-L-methionine = 4'-O-methylnorbelladine + S-adenosyl-L-homocysteine + H(+). It participates in alkaloid biosynthesis. Functionally, 4'-O-methyltransferase converting norbelladine to 4'-O-methylnorbelladine. 4'-O-methylnorbelladine is a precursor to all Amaryllidaceae alkaloids such as galanthamine, lycorine and haemanthamine, and including haemanthamine- and crinamine-type alkaloids, promising anticancer agents. The chain is Norbelladine 4'-O-methyltransferase 5 from Narcissus aff. pseudonarcissus MK-2014 (Daffodil).